Reading from the N-terminus, the 242-residue chain is Uridylate kinase (242 aa).

16-19 contacts ATP; the sequence is KVSG. A UMP-binding site is contributed by Gly58. ATP contacts are provided by Gly59 and Arg63. Residues Asp78 and 139 to 146 contribute to the UMP site; that span reads TGNPFCTT. The ATP site is built by Thr166, Gln167, Tyr172, and Asp175.

It belongs to the UMP kinase family. In terms of assembly, homohexamer.

Its subcellular location is the cytoplasm. It catalyses the reaction UMP + ATP = UDP + ADP. The protein operates within pyrimidine metabolism; CTP biosynthesis via de novo pathway; UDP from UMP (UMPK route): step 1/1. Inhibited by UTP. Functionally, catalyzes the reversible phosphorylation of UMP to UDP. This is Uridylate kinase from Rickettsia massiliae (strain Mtu5).